The sequence spans 451 residues: NADP-specific glutamate dehydrogenase (451 aa).

Residue Lys-114 is part of the active site.

The protein belongs to the Glu/Leu/Phe/Val dehydrogenases family. Homohexamer.

The catalysed reaction is L-glutamate + NADP(+) + H2O = 2-oxoglutarate + NH4(+) + NADPH + H(+). The protein is NADP-specific glutamate dehydrogenase (GDH2) of Fusarium fujikuroi (Bakanae and foot rot disease fungus).